The chain runs to 116 residues: UPF0342 protein BH1149 (116 aa).

The protein belongs to the UPF0342 family.

This Halalkalibacterium halodurans (strain ATCC BAA-125 / DSM 18197 / FERM 7344 / JCM 9153 / C-125) (Bacillus halodurans) protein is UPF0342 protein BH1149.